Reading from the N-terminus, the 217-residue chain is 3,4-dihydroxy-2-butanone 4-phosphate synthase (217 aa).

D-ribulose 5-phosphate contacts are provided by residues 37–38 (RE), Asp42, 150–154 (RGGHT), and Glu174. A Mg(2+)-binding site is contributed by Glu38. Residue His153 coordinates Mg(2+).

Belongs to the DHBP synthase family. As to quaternary structure, homodimer. It depends on Mg(2+) as a cofactor. The cofactor is Mn(2+).

The catalysed reaction is D-ribulose 5-phosphate = (2S)-2-hydroxy-3-oxobutyl phosphate + formate + H(+). It functions in the pathway cofactor biosynthesis; riboflavin biosynthesis; 2-hydroxy-3-oxobutyl phosphate from D-ribulose 5-phosphate: step 1/1. Functionally, catalyzes the conversion of D-ribulose 5-phosphate to formate and 3,4-dihydroxy-2-butanone 4-phosphate. This is 3,4-dihydroxy-2-butanone 4-phosphate synthase from Klebsiella pneumoniae subsp. pneumoniae (strain ATCC 700721 / MGH 78578).